The sequence spans 379 residues: Sensor histidine kinase YhcY (379 aa).

The Histidine kinase domain occupies 185 to 373 (RLAQELHDSV…KLSIRLPLKS (189 aa)). Residue histidine 191 is modified to Phosphohistidine; by autocatalysis.

The enzyme catalyses ATP + protein L-histidine = ADP + protein N-phospho-L-histidine.. Its function is as follows. Member of the two-component regulatory system YhcY/YhcZ. Probably activates YhcZ by phosphorylation. The sequence is that of Sensor histidine kinase YhcY (yhcY) from Bacillus subtilis (strain 168).